Here is a 177-residue protein sequence, read N- to C-terminus: Thymidine kinase (177 aa).

11 to 18 is an ATP binding site; that stretch reads GPMFSGKS. E83 acts as the Proton acceptor in catalysis. Residue F113 participates in substrate binding. 2 residues coordinate Zn(2+): C138 and C141. Residue 157–161 participates in substrate binding; that stretch reads IEIIG. C170 and C173 together coordinate Zn(2+).

The protein belongs to the thymidine kinase family. In terms of assembly, homotetramer. Two molecules of substrate bind to each enzyme tetramer.

The enzyme catalyses thymidine + ATP = dTMP + ADP + H(+). Functionally, phosphorylates thymidine and thymidine analogs, such as azidothymidine (AZT). Part of the salvage pathway for pyrimidine deoxyribonucleotide synthesis. This chain is Thymidine kinase (OPG101), found in Vaccinia virus (strain Tian Tan) (VACV).